The following is a 500-amino-acid chain: MPHTIKKMSLIGLILMIFTSVFGFANSPSAYYLMGYSAIPFYIFSALLFFIPFALMMAEMGAAYRKEEGGIYSWMNNSVGPRFAFIGTFMWFSSYIIWMVSTSAKVWVPFSTFLYGSDMTQHWRIAGLEPTQVVGLLAVAWMILVTVVASKGINKIARITAVGGIAVMCLNLVLLLVSITILLLNGGHFAQDINFLASPNPGYQSGLAMLSFVVFAIFAYGGIEAVGGLVDKTENPEKNFAKGIVFAAIVISIGYSLAIFLWGVSTNWQQVLSNGSVNLGNITYVLMKSLGMTLGNALHLSPEASLSLGVWFARITGLSMFLAYTGAFFTLCYSPLKAIIQGTPKALWPEPMTRLNAMGMPSIAMWMQCGLVTVFILLVSFGGGTASAFFNKLTLMANVSMTLPYLFLALAFPFFKARQDLDRPFVIFKTHLSAMIATVVVVLVVTFANVFTIIQPVVEAGDWDSTLWMIGGPVFFSLLAMAIYQNYCSRVAKNPQWAVE.

The Cytoplasmic segment spans residues 1 to 7 (MPHTIKK). Residues 8–28 (MSLIGLILMIFTSVFGFANSP) form a helical membrane-spanning segment. The Periplasmic portion of the chain corresponds to 29–37 (SAYYLMGYS). Residues 38-58 (AIPFYIFSALLFFIPFALMMA) form a helical membrane-spanning segment. Residues 59–82 (EMGAAYRKEEGGIYSWMNNSVGPR) lie on the Cytoplasmic side of the membrane. A helical transmembrane segment spans residues 83–103 (FAFIGTFMWFSSYIIWMVSTS). Over 104–132 (AKVWVPFSTFLYGSDMTQHWRIAGLEPTQ) the chain is Periplasmic. A helical transmembrane segment spans residues 133-153 (VVGLLAVAWMILVTVVASKGI). Residues 154–163 (NKIARITAVG) are Cytoplasmic-facing. Residues 164 to 184 (GIAVMCLNLVLLLVSITILLL) traverse the membrane as a helical segment. Topologically, residues 185–209 (NGGHFAQDINFLASPNPGYQSGLAM) are periplasmic. Residues 210-230 (LSFVVFAIFAYGGIEAVGGLV) traverse the membrane as a helical segment. Topologically, residues 231-243 (DKTENPEKNFAKG) are cytoplasmic. The helical transmembrane segment at 244 to 264 (IVFAAIVISIGYSLAIFLWGV) threads the bilayer. At 265-319 (STNWQQVLSNGSVNLGNITYVLMKSLGMTLGNALHLSPEASLSLGVWFARITGLS) the chain is on the periplasmic side. The chain crosses the membrane as a helical span at residues 320 to 340 (MFLAYTGAFFTLCYSPLKAII). Over 341 to 369 (QGTPKALWPEPMTRLNAMGMPSIAMWMQC) the chain is Cytoplasmic. Residues 370 to 390 (GLVTVFILLVSFGGGTASAFF) traverse the membrane as a helical segment. Topologically, residues 391-394 (NKLT) are periplasmic. A helical transmembrane segment spans residues 395-415 (LMANVSMTLPYLFLALAFPFF). Residues 416–433 (KARQDLDRPFVIFKTHLS) lie on the Cytoplasmic side of the membrane. Residues 434 to 454 (AMIATVVVVLVVTFANVFTII) form a helical membrane-spanning segment. Topologically, residues 455-462 (QPVVEAGD) are periplasmic. The chain crosses the membrane as a helical span at residues 463 to 483 (WDSTLWMIGGPVFFSLLAMAI). The Cytoplasmic segment spans residues 484–500 (YQNYCSRVAKNPQWAVE).

It belongs to the amino acid-polyamine-organocation (APC) superfamily.

Its subcellular location is the cell inner membrane. This Escherichia coli (strain K12) protein is Inner membrane transporter YjeM (yjeM).